The sequence spans 325 residues: ATP phosphoribosyltransferase (325 aa).

It belongs to the ATP phosphoribosyltransferase family. Long subfamily. The cofactor is Mg(2+).

It localises to the cytoplasm. The enzyme catalyses 1-(5-phospho-beta-D-ribosyl)-ATP + diphosphate = 5-phospho-alpha-D-ribose 1-diphosphate + ATP. The protein operates within amino-acid biosynthesis; L-histidine biosynthesis; L-histidine from 5-phospho-alpha-D-ribose 1-diphosphate: step 1/9. With respect to regulation, feedback inhibited by histidine. In terms of biological role, catalyzes the condensation of ATP and 5-phosphoribose 1-diphosphate to form N'-(5'-phosphoribosyl)-ATP (PR-ATP). Has a crucial role in the pathway because the rate of histidine biosynthesis seems to be controlled primarily by regulation of HisG enzymatic activity. This is ATP phosphoribosyltransferase from Nitrobacter winogradskyi (strain ATCC 25391 / DSM 10237 / CIP 104748 / NCIMB 11846 / Nb-255).